The chain runs to 510 residues: Ribose import ATP-binding protein RbsA 1 (510 aa).

ABC transporter domains lie at 20–256 and 266–510; these read LEMR…VGRD and VTLG…TGNA. 52-59 is a binding site for ATP; it reads GENGAGKS.

This sequence belongs to the ABC transporter superfamily. Ribose importer (TC 3.A.1.2.1) family. As to quaternary structure, the complex is composed of an ATP-binding protein (RbsA), two transmembrane proteins (RbsC) and a solute-binding protein (RbsB).

It localises to the cell inner membrane. The enzyme catalyses D-ribose(out) + ATP + H2O = D-ribose(in) + ADP + phosphate + H(+). Part of the ABC transporter complex RbsABC involved in ribose import. Responsible for energy coupling to the transport system. This is Ribose import ATP-binding protein RbsA 1 from Agrobacterium fabrum (strain C58 / ATCC 33970) (Agrobacterium tumefaciens (strain C58)).